Reading from the N-terminus, the 377-residue chain is Acetylornithine aminotransferase (377 aa).

Pyridoxal 5'-phosphate is bound by residues 94–95 (GT) and Phe121. Arg124 lines the N(2)-acetyl-L-ornithine pocket. 206-209 (DEIQ) contributes to the pyridoxal 5'-phosphate binding site. Lys235 bears the N6-(pyridoxal phosphate)lysine mark. Ser263 is a binding site for N(2)-acetyl-L-ornithine. Thr264 is a binding site for pyridoxal 5'-phosphate.

This sequence belongs to the class-III pyridoxal-phosphate-dependent aminotransferase family. ArgD subfamily. In terms of assembly, homodimer. Requires pyridoxal 5'-phosphate as cofactor.

It is found in the cytoplasm. It carries out the reaction N(2)-acetyl-L-ornithine + 2-oxoglutarate = N-acetyl-L-glutamate 5-semialdehyde + L-glutamate. The protein operates within amino-acid biosynthesis; L-arginine biosynthesis; N(2)-acetyl-L-ornithine from L-glutamate: step 4/4. The polypeptide is Acetylornithine aminotransferase (Lactococcus lactis subsp. lactis (strain IL1403) (Streptococcus lactis)).